A 418-amino-acid polypeptide reads, in one-letter code: MAERFVVTGGNRLSGEVTVGGAKNSVLKLMAATLLAEGTSTITNCPDILDVPLMAEVLRGLGATVELYGDVARITSPDEPKYDADFAAVRQFRASVCVLGPLVGRCKQARVALPGGDAIGSRPLDMHQAGLRQLGARCNIEHGCVVASAETLRGAEIQLEFPSVGATENILMAAVVAEGVTTIHNAAREPDVVDLCTMLNQMGAQVEGVGSPTMTITGVPRLYPTEHRVIGDRIVAATWGIAAAMTRGDIAVTGVDPAHLQLVLHKLHDAGATVTQTDDSFRVAQYERPKAVNVATLPFPGFPTDLQPMAIALTSIADGTSMITENVFEARFRFVEEMIRLGADARTDGHHAVVRGLPQLSSAPVWCSDIRAGAGLVLAGLVADGDTEVYDVFHIDRGYPLFVENLANLGAEIERVCL.

23–24 serves as a coordination point for phosphoenolpyruvate; sequence KN. A UDP-N-acetyl-alpha-D-glucosamine-binding site is contributed by Arg-93. Catalysis depends on Asp-117, which acts as the Proton donor. UDP-N-acetyl-alpha-D-glucosamine contacts are provided by Asp-305 and Val-327.

This sequence belongs to the EPSP synthase family. MurA subfamily.

The protein localises to the cytoplasm. It carries out the reaction phosphoenolpyruvate + UDP-N-acetyl-alpha-D-glucosamine = UDP-N-acetyl-3-O-(1-carboxyvinyl)-alpha-D-glucosamine + phosphate. The protein operates within cell wall biogenesis; peptidoglycan biosynthesis. Its function is as follows. Cell wall formation. Adds enolpyruvyl to UDP-N-acetylglucosamine. In Mycobacterium leprae (strain TN), this protein is UDP-N-acetylglucosamine 1-carboxyvinyltransferase.